A 177-amino-acid chain; its full sequence is Probable chemoreceptor glutamine deamidase CheD (177 aa).

The protein belongs to the CheD family.

The catalysed reaction is L-glutaminyl-[protein] + H2O = L-glutamyl-[protein] + NH4(+). Probably deamidates glutamine residues to glutamate on methyl-accepting chemotaxis receptors (MCPs), playing an important role in chemotaxis. The protein is Probable chemoreceptor glutamine deamidase CheD of Pseudomonas savastanoi pv. phaseolicola (strain 1448A / Race 6) (Pseudomonas syringae pv. phaseolicola (strain 1448A / Race 6)).